The chain runs to 795 residues: Phenylalanine--tRNA ligase beta subunit (795 aa).

The tRNA-binding domain maps to 39 to 148 (AGSFHGVVVG…ADAPIGTDIR (110 aa)). Residues 401-476 (PKRATITLRR…RVYGYNNIPD (76 aa)) enclose the B5 domain. Mg(2+)-binding residues include aspartate 454, aspartate 460, glutamate 463, and glutamate 464. Positions 701–794 (SRFPANRRDI…LKERFQASLR (94 aa)) constitute an FDX-ACB domain.

This sequence belongs to the phenylalanyl-tRNA synthetase beta subunit family. Type 1 subfamily. Tetramer of two alpha and two beta subunits. Mg(2+) serves as cofactor.

It localises to the cytoplasm. It carries out the reaction tRNA(Phe) + L-phenylalanine + ATP = L-phenylalanyl-tRNA(Phe) + AMP + diphosphate + H(+). This is Phenylalanine--tRNA ligase beta subunit from Shigella sonnei (strain Ss046).